Reading from the N-terminus, the 286-residue chain is 3-hydroxybutyryl-CoA dehydrogenase (286 aa).

The protein belongs to the 3-hydroxyacyl-CoA dehydrogenase family.

The enzyme catalyses 3-hydroxybutanoyl-CoA + NAD(+) = acetoacetyl-CoA + NADH + H(+). It catalyses the reaction (3S)-3-hydroxybutanoyl-CoA + NADP(+) = acetoacetyl-CoA + NADPH + H(+). It functions in the pathway lipid metabolism; butanoate metabolism. This Mycobacterium tuberculosis (strain CDC 1551 / Oshkosh) protein is 3-hydroxybutyryl-CoA dehydrogenase (fadB2).